A 116-amino-acid chain; its full sequence is MALLTALAVGAGGAAGAVARYAVGLSVGRRAVDTGLVNVFGSLLFGVAIGADFGGAPAVAVTVGFCGAFTTFSSFAVETVRLAEDGQRLAAAGNAVGTLAAALLAVFLGIALGAAL.

Helical transmembrane passes span 3–23 (LLTALAVGAGGAAGAVARYAV) and 43–63 (LLFGVAIGADFGGAPAVAVTV). Na(+) contacts are provided by G67 and T70. A helical membrane pass occupies residues 96 to 116 (VGTLAAALLAVFLGIALGAAL).

It belongs to the fluoride channel Fluc/FEX (TC 1.A.43) family.

The protein resides in the cell membrane. The catalysed reaction is fluoride(in) = fluoride(out). Na(+) is not transported, but it plays an essential structural role and its presence is essential for fluoride channel function. Its function is as follows. Fluoride-specific ion channel. Important for reducing fluoride concentration in the cell, thus reducing its toxicity. The sequence is that of Fluoride-specific ion channel FluC 2 from Natronomonas pharaonis (strain ATCC 35678 / DSM 2160 / CIP 103997 / JCM 8858 / NBRC 14720 / NCIMB 2260 / Gabara) (Halobacterium pharaonis).